Consider the following 419-residue polypeptide: Putative zinc metalloprotease SP_0263 (419 aa).

His18 contributes to the Zn(2+) binding site. The active site involves Glu19. Position 22 (His22) interacts with Zn(2+). 3 helical membrane-spanning segments follow: residues 169-191, 345-367, and 388-410; these read LITNFAGPMNNFILGVVVFWVLI, ILYFLAMISINIGIFNLIPIPAL, and EIETYVTLAGVVIMVVLMIAVTW.

Belongs to the peptidase M50B family. It depends on Zn(2+) as a cofactor.

The protein resides in the cell membrane. This Streptococcus pneumoniae serotype 4 (strain ATCC BAA-334 / TIGR4) protein is Putative zinc metalloprotease SP_0263.